A 664-amino-acid chain; its full sequence is Bifunctional 3-dehydroquinate synthase/phosphatase (664 aa).

Positions 1-352 (MKKIFDDIYV…KIIDKYKNNF (352 aa)) are 3-dehydroquinate synthase. Residues 61 to 66 (DGEEYK), 95 to 99 (GVICD), 119 to 120 (TS), Lys132, Lys141, and 159 to 162 (FLKT) each bind NAD(+). Residues Glu174, His238, and His255 each contribute to the Zn(2+) site. Residues 353–664 (LRASIDIGTN…GAILEGVENK (312 aa)) are GPPA/PPX.

It in the N-terminal section; belongs to the sugar phosphate cyclases superfamily. Dehydroquinate synthase family. The protein in the C-terminal section; belongs to the GppA/Ppx family. Monomer. It depends on NAD(+) as a cofactor. Requires Co(2+) as cofactor. Zn(2+) is required as a cofactor.

It is found in the cytoplasm. The catalysed reaction is 7-phospho-2-dehydro-3-deoxy-D-arabino-heptonate = 3-dehydroquinate + phosphate. It functions in the pathway metabolic intermediate biosynthesis; chorismate biosynthesis; chorismate from D-erythrose 4-phosphate and phosphoenolpyruvate: step 2/7. This Fusobacterium nucleatum subsp. nucleatum (strain ATCC 25586 / DSM 15643 / BCRC 10681 / CIP 101130 / JCM 8532 / KCTC 2640 / LMG 13131 / VPI 4355) protein is Bifunctional 3-dehydroquinate synthase/phosphatase (aroB).